Consider the following 62-residue polypeptide: Cytochrome b-c1 complex subunit 6-2, mitochondrial (62 aa).

Disulfide bonds link Cys17/Cys59 and Cys31/Cys45.

Belongs to the UQCRH/QCR6 family. Component of the ubiquinol-cytochrome c oxidoreductase (cytochrome b-c1 complex, complex III, CIII), a multisubunit enzyme composed of 10 subunits. The complex is composed of 3 respiratory subunits cytochrome b (MT-CYB), cytochrome c1 (CYC1-1 or CYC1-2) and Rieske protein (UCR1-1 or UCR1-2), 2 core protein subunits MPPalpha1 (or MPPalpha2) and MPPB, and 5 low-molecular weight protein subunits QCR7-1 (or QCR7-2), UCRQ-1 (or UCRQ-2), QCR9, UCRY and probably QCR6-1 (or QCR6-2). The complex exists as an obligatory dimer and forms supercomplexes (SCs) in the inner mitochondrial membrane with NADH-ubiquinone oxidoreductase (complex I, CI), resulting in different assemblies (supercomplexes SCI(1)III(2) and SCI(2)III(4)).

The protein resides in the mitochondrion inner membrane. Its function is as follows. Component of the ubiquinol-cytochrome c oxidoreductase, a multisubunit transmembrane complex that is part of the mitochondrial electron transport chain which drives oxidative phosphorylation. The respiratory chain contains 3 multisubunit complexes succinate dehydrogenase (complex II, CII), ubiquinol-cytochrome c oxidoreductase (cytochrome b-c1 complex, complex III, CIII) and cytochrome c oxidase (complex IV, CIV), that cooperate to transfer electrons derived from NADH and succinate to molecular oxygen, creating an electrochemical gradient over the inner membrane that drives transmembrane transport and the ATP synthase. The cytochrome b-c1 complex catalyzes electron transfer from ubiquinol to cytochrome c, linking this redox reaction to translocation of protons across the mitochondrial inner membrane, with protons being carried across the membrane as hydrogens on the quinol. In the process called Q cycle, 2 protons are consumed from the matrix, 4 protons are released into the intermembrane space and 2 electrons are passed to cytochrome c. This Arabidopsis thaliana (Mouse-ear cress) protein is Cytochrome b-c1 complex subunit 6-2, mitochondrial (QCR6-2).